The following is a 689-amino-acid chain: Glycine--tRNA ligase beta subunit (689 aa).

This sequence belongs to the class-II aminoacyl-tRNA synthetase family. Tetramer of two alpha and two beta subunits.

The protein localises to the cytoplasm. It catalyses the reaction tRNA(Gly) + glycine + ATP = glycyl-tRNA(Gly) + AMP + diphosphate. This is Glycine--tRNA ligase beta subunit from Escherichia coli O8 (strain IAI1).